Here is a 246-residue protein sequence, read N- to C-terminus: Ubiquinone biosynthesis O-methyltransferase (246 aa).

Arginine 40, glycine 70, aspartate 91, and methionine 135 together coordinate S-adenosyl-L-methionine.

It belongs to the methyltransferase superfamily. UbiG/COQ3 family.

It carries out the reaction a 3-demethylubiquinol + S-adenosyl-L-methionine = a ubiquinol + S-adenosyl-L-homocysteine + H(+). It catalyses the reaction a 3-(all-trans-polyprenyl)benzene-1,2-diol + S-adenosyl-L-methionine = a 2-methoxy-6-(all-trans-polyprenyl)phenol + S-adenosyl-L-homocysteine + H(+). Its pathway is cofactor biosynthesis; ubiquinone biosynthesis. Functionally, O-methyltransferase that catalyzes the 2 O-methylation steps in the ubiquinone biosynthetic pathway. This Colwellia psychrerythraea (strain 34H / ATCC BAA-681) (Vibrio psychroerythus) protein is Ubiquinone biosynthesis O-methyltransferase.